A 673-amino-acid polypeptide reads, in one-letter code: Putative K(+)-stimulated pyrophosphate-energized sodium pump (673 aa).

5 helical membrane-spanning segments follow: residues 3–23, 62–82, 84–104, 127–147, and 154–174; these read SFIV…FMLS, IVIV…ACFI, GAIF…KANV, VMGM…YYIF, and VTGF…GGGI. Lysine 177 serves as a coordination point for substrate. Mg(2+) is bound by residues aspartate 180, aspartate 184, asparagine 207, and aspartate 210. 6 helical membrane passes run 222 to 242, 247 to 267, 279 to 299, 302 to 322, 364 to 384, and 387 to 407; these read LFES…VVYA, VMFP…GILF, ALNT…AILS, IFGN…GMII, LWPI…MGGG, and AMVG…TTGL. Aspartate 419 lines the Mg(2+) pocket. 4 helical membrane passes run 449-469, 486-506, 553-573, and 576-596; these read AAIG…SLFA, VTLV…ALTM, EMIL…LLLG, and ALGG…ILMS. 3 residues coordinate Ca(2+): aspartate 603, aspartate 629, and aspartate 633. Lysine 636 contributes to the substrate binding site. Residues 652–672 form a helical membrane-spanning segment; the sequence is IVSLVFAPVVLQYGGILLNLI.

This sequence belongs to the H(+)-translocating pyrophosphatase (TC 3.A.10) family. K(+)-stimulated subfamily. In terms of assembly, homodimer. It depends on Mg(2+) as a cofactor.

The protein resides in the cell membrane. The enzyme catalyses Na(+)(in) + diphosphate + H2O = Na(+)(out) + 2 phosphate + H(+). Its activity is regulated as follows. Requires K(+) for maximal activity. Its function is as follows. Sodium pump that utilizes the energy of pyrophosphate hydrolysis as the driving force for Na(+) movement across the membrane. In Clostridium tetani (strain Massachusetts / E88), this protein is Putative K(+)-stimulated pyrophosphate-energized sodium pump.